The chain runs to 164 residues: Large ribosomal subunit protein bL9 (164 aa).

The protein belongs to the bacterial ribosomal protein bL9 family.

In terms of biological role, binds to the 23S rRNA. This is Large ribosomal subunit protein bL9 from Borrelia duttonii (strain Ly).